A 20-amino-acid chain; its full sequence is Cytolysin tenebrosin-A (20 aa).

The plays an important role in the hemolytic activity stretch occupies residues 3 to 12 (AVAGAVIEGA). The interval 11–20 (GATLTFEVLQ) is N-terminal region.

The protein belongs to the actinoporin family. Sea anemone subfamily. Octamer or nonamer in membranes. Monomer in the soluble state.

The protein localises to the secreted. It is found in the nematocyst. The protein resides in the target cell membrane. Functionally, pore-forming protein that forms cations-selective hydrophilic pores of around 1 nm and causes cardiac stimulation and cytolysis. Pore formation is a multi-step process that involves specific recognition of membrane sphingomyelin (but neither cholesterol nor phosphatidylcholine) using aromatic rich region and adjacent phosphocholine (POC) binding site, firm binding to the membrane (mainly driven by hydrophobic interactions) accompanied by the transfer of the N-terminal region to the lipid-water interface and finally pore formation after oligomerization of monomers. The sequence is that of Cytolysin tenebrosin-A from Actinia tenebrosa (Australian red waratah sea anemone).